A 269-amino-acid polypeptide reads, in one-letter code: Phosphatidylglycerol--prolipoprotein diacylglyceryl transferase (269 aa).

Transmembrane regions (helical) follow at residues 21–41 (WYGIIIASAVILAVYLSVLEG), 54–74 (LLLYSLPVAIICARIYYVVFE), and 88–108 (IWDGGIAIYGALIGAVIVILI). Arg136 is a binding site for a 1,2-diacyl-sn-glycero-3-phospho-(1'-sn-glycerol). Transmembrane regions (helical) follow at residues 206-226 (GEVVLSYIIWYSFGRFFIEGM) and 236-256 (LRVSQWLSLILFISAIAAIFY).

The protein belongs to the Lgt family.

It is found in the cell membrane. It catalyses the reaction L-cysteinyl-[prolipoprotein] + a 1,2-diacyl-sn-glycero-3-phospho-(1'-sn-glycerol) = an S-1,2-diacyl-sn-glyceryl-L-cysteinyl-[prolipoprotein] + sn-glycerol 1-phosphate + H(+). The protein operates within protein modification; lipoprotein biosynthesis (diacylglyceryl transfer). Catalyzes the transfer of the diacylglyceryl group from phosphatidylglycerol to the sulfhydryl group of the N-terminal cysteine of a prolipoprotein, the first step in the formation of mature lipoproteins. In Ligilactobacillus salivarius (strain UCC118) (Lactobacillus salivarius), this protein is Phosphatidylglycerol--prolipoprotein diacylglyceryl transferase.